The sequence spans 637 residues: Clathrin coat assembly protein AP180A (637 aa).

The 126-residue stretch at 1-126 folds into the ENTH domain; sequence MTTYFKLVKG…REFGKIKKDY (126 aa). Residues 555 to 637 are disordered; that stretch reads TQNHLQQQQQ…YANNLNLIDM (83 aa). Low complexity-rich tracts occupy residues 560–579 and 600–622; these read QQQQ…QPQQ and QPQN…TQQP. The tract at residues 587 to 637 is clathrin-binding; it reads AGANPVTNITGTVQPQNFPFYPQQQPQPEQSQTQQPVLGNQYANNLNLIDM. Polar residues predominate over residues 623–637; that stretch reads VLGNQYANNLNLIDM.

Belongs to the AP180 family. As to quaternary structure, interacts with PAN1 and the clathrin heavy and light chains CHC1 and CLC1.

It localises to the bud. It is found in the bud neck. Its subcellular location is the cell membrane. The protein resides in the cytoplasm. Involved in endocytosis and clathrin cage assembly. This is Clathrin coat assembly protein AP180A (YAP1801) from Saccharomyces cerevisiae (strain ATCC 204508 / S288c) (Baker's yeast).